A 645-amino-acid chain; its full sequence is MCKKPYYITTPIYYPSTNLHIGNTYTTVAADAIARFKRLTGHEVMFLTGTDEHGQKIERIANEKGITPKEHVDEIVAGIKDLWKMMNISYDKFIRTTDDYHVKAVQEIFKKLYDQGDIYKDSYEGLYCTPCESFWTETQLVNGNCPDCGRPVEKAKEEAYFFKMSKYADRLIQYIEEHPDFIQPESRKNEMLNNFLRPGLQDLCVSRTSFTWGIPVSFDEKHVIYVWIDALSNYITALGYGQENQELYKKFWPADVHLIGKDILRFHTIYWPIMLMALGLELPKQVFGHGWLLVDGGKMSKSKGNVVDPVVLVNMFGADAVRYYLLREIPFGSDGLFNNEIFIKKVNTDLANDLGNLLSRTIAMVYKYFGGVIQAPTCKEPIDDELINLALSTPGKVEASIDALKIPEALESIWTLISRANKYIDETTPWILAKDEEKKERLGTVLYNLLETLRFVSVMISPFLTETSVKINAQLNTKVTTWESLKEFNGTVAGDKVVKGDVIFPRIDVEEKLAELEALKPAPVKPANEELVENPIKEEITIDDFDKIDLRVVKVLECEPVKKAKKLLKLKVDLGGEERQVISGIAQYYKPEELVGKYVVLVANLKPVKLRGELSQGMILAAAPSDDSELLLVNPGEMLTGSQVR.

Positions 13-23 (YYPSTNLHIGN) match the 'HIGH' region motif. The Zn(2+) site is built by C128, C131, C145, and C148. The 'KMSKS' region signature appears at 298–302 (KMSKS). K301 lines the ATP pocket. The region spanning 544–645 (DFDKIDLRVV…GEMLTGSQVR (102 aa)) is the tRNA-binding domain.

It belongs to the class-I aminoacyl-tRNA synthetase family. MetG type 2A subfamily. As to quaternary structure, homodimer. Zn(2+) is required as a cofactor.

Its subcellular location is the cytoplasm. The enzyme catalyses tRNA(Met) + L-methionine + ATP = L-methionyl-tRNA(Met) + AMP + diphosphate. In terms of biological role, is required not only for elongation of protein synthesis but also for the initiation of all mRNA translation through initiator tRNA(fMet) aminoacylation. This chain is Methionine--tRNA ligase (metG), found in Clostridium perfringens (strain 13 / Type A).